We begin with the raw amino-acid sequence, 182 residues long: Large ribosomal subunit protein uL16 (182 aa).

This sequence belongs to the universal ribosomal protein uL16 family.

This Thermococcus onnurineus (strain NA1) protein is Large ribosomal subunit protein uL16.